Consider the following 51-residue polypeptide: rpoE leader peptide (51 aa).

A short protein whose stop codon overlaps with the start codon of downstream rpoE; a premature stop codon at position 12 results in decreased expression of ECF sigma factor RpoE, thus they are translationally coupled. This Escherichia coli (strain K12) protein is rpoE leader peptide.